Consider the following 193-residue polypeptide: Holliday junction branch migration complex subunit RuvA (193 aa).

The segment at 1-64 (MIGRIAGTLI…EDAHLLYGFG (64 aa)) is domain I. The interval 65–143 (TASERNTFRE…AELGHVPGTP (79 aa)) is domain II. The tract at residues 144-151 (AVPDSAVD) is flexible linker. The tract at residues 151 to 193 (DVLNALLALGYSEKEAAAAIKQVPAGTGVSDGIKLALKALSKA) is domain III.

Belongs to the RuvA family. In terms of assembly, homotetramer. Forms an RuvA(8)-RuvB(12)-Holliday junction (HJ) complex. HJ DNA is sandwiched between 2 RuvA tetramers; dsDNA enters through RuvA and exits via RuvB. An RuvB hexamer assembles on each DNA strand where it exits the tetramer. Each RuvB hexamer is contacted by two RuvA subunits (via domain III) on 2 adjacent RuvB subunits; this complex drives branch migration. In the full resolvosome a probable DNA-RuvA(4)-RuvB(12)-RuvC(2) complex forms which resolves the HJ.

Its subcellular location is the cytoplasm. In terms of biological role, the RuvA-RuvB-RuvC complex processes Holliday junction (HJ) DNA during genetic recombination and DNA repair, while the RuvA-RuvB complex plays an important role in the rescue of blocked DNA replication forks via replication fork reversal (RFR). RuvA specifically binds to HJ cruciform DNA, conferring on it an open structure. The RuvB hexamer acts as an ATP-dependent pump, pulling dsDNA into and through the RuvAB complex. HJ branch migration allows RuvC to scan DNA until it finds its consensus sequence, where it cleaves and resolves the cruciform DNA. This Cupriavidus necator (strain ATCC 17699 / DSM 428 / KCTC 22496 / NCIMB 10442 / H16 / Stanier 337) (Ralstonia eutropha) protein is Holliday junction branch migration complex subunit RuvA.